Reading from the N-terminus, the 354-residue chain is D-alanine--D-alanine ligase (354 aa).

The region spanning 132–342 is the ATP-grasp domain; it reads KMVFERAGLP…FPSLVDRLLQ (211 aa). 168–223 contributes to the ATP binding site; that stretch reads EAQVGYPCFVKPANLGSSVGIAKVRNRSELEAALDNAASYDRRIIVEAGLTDIREV. The Mg(2+) site is built by Asp-295, Glu-309, and Asn-311.

This sequence belongs to the D-alanine--D-alanine ligase family. The cofactor is Mg(2+). Mn(2+) serves as cofactor.

The protein localises to the cytoplasm. The catalysed reaction is 2 D-alanine + ATP = D-alanyl-D-alanine + ADP + phosphate + H(+). It functions in the pathway cell wall biogenesis; peptidoglycan biosynthesis. Functionally, cell wall formation. In Synechocystis sp. (strain ATCC 27184 / PCC 6803 / Kazusa), this protein is D-alanine--D-alanine ligase.